The chain runs to 612 residues: Lysophospholipase (612 aa).

Residues 1 to 9 (DITFAGVQR) form the signal peptide. The PLA2c domain occupies 24–571 (SCPASRPTVR…DRYCWNGTVN (548 aa)). 17 N-linked (GlcNAc...) asparagine glycosylation sites follow: N41, N81, N116, N150, N223, N267, N306, N335, N427, N440, N446, N477, N498, N526, N532, N567, and N571.

The protein belongs to the lysophospholipase family. In terms of processing, N-glycosylated.

It localises to the secreted. It carries out the reaction a 1-acyl-sn-glycero-3-phosphocholine + H2O = sn-glycerol 3-phosphocholine + a fatty acid + H(+). In terms of biological role, catalyzes the release of fatty acids from lysophospholipids. This Penicillium chrysogenum (Penicillium notatum) protein is Lysophospholipase.